Consider the following 122-residue polypeptide: MSITKEQILEAISEMSVMNVVDLITAMEEKFGVSASMSINSNNHNEKDLREEKTEFDIFLKVIGPNKVSVIKTVRSATGLGLKEAKDLVESAPTVLKENISKEDAESLKKTLEDVGAEIEIK.

This sequence belongs to the bacterial ribosomal protein bL12 family. As to quaternary structure, homodimer. Part of the ribosomal stalk of the 50S ribosomal subunit. Forms a multimeric L10(L12)X complex, where L10 forms an elongated spine to which 2 to 4 L12 dimers bind in a sequential fashion. Binds GTP-bound translation factors.

Forms part of the ribosomal stalk which helps the ribosome interact with GTP-bound translation factors. Is thus essential for accurate translation. The polypeptide is Large ribosomal subunit protein bL12 (Buchnera aphidicola subsp. Acyrthosiphon pisum (strain Tuc7)).